The sequence spans 165 residues: Cyanate hydratase (165 aa).

Active-site residues include arginine 106, glutamate 109, and serine 132.

This sequence belongs to the cyanase family.

It catalyses the reaction cyanate + hydrogencarbonate + 3 H(+) = NH4(+) + 2 CO2. Functionally, catalyzes the reaction of cyanate with bicarbonate to produce ammonia and carbon dioxide. The polypeptide is Cyanate hydratase (Laccaria bicolor (strain S238N-H82 / ATCC MYA-4686) (Bicoloured deceiver)).